The chain runs to 404 residues: Glucose-1-phosphate adenylyltransferase (404 aa).

Alpha-D-glucose 1-phosphate is bound by residues Y99, G164, 179 to 180 (EK), and S197.

This sequence belongs to the bacterial/plant glucose-1-phosphate adenylyltransferase family.

The catalysed reaction is alpha-D-glucose 1-phosphate + ATP + H(+) = ADP-alpha-D-glucose + diphosphate. It participates in capsule biogenesis; capsule polysaccharide biosynthesis. The protein operates within glycan biosynthesis; glycogen biosynthesis. Its function is as follows. Involved in the biosynthesis of ADP-glucose, a building block, required in the biosynthesis of maltose-1-phosphate (M1P) and in the elongation reactions to produce linear alpha-1,4-glucans. Catalyzes the reaction between ATP and alpha-D-glucose 1-phosphate (G1P) to produce pyrophosphate and ADP-Glc. This chain is Glucose-1-phosphate adenylyltransferase, found in Mycobacterium marinum (strain ATCC BAA-535 / M).